A 104-amino-acid polypeptide reads, in one-letter code: Complex III assembly factor LYRM7 (104 aa).

This sequence belongs to the complex I LYR family. In terms of assembly, interacts with UQCRFS1.

The protein resides in the mitochondrion matrix. In terms of biological role, assembly factor required for Rieske Fe-S protein UQCRFS1 incorporation into the cytochrome b-c1 (CIII) complex. Functions as a chaperone, binding to this subunit within the mitochondrial matrix and stabilizing it prior to its translocation and insertion into the late CIII dimeric intermediate within the mitochondrial inner membrane. The chain is Complex III assembly factor LYRM7 (LYRM7) from Danio rerio (Zebrafish).